The primary structure comprises 104 residues: MELSNTESIAGKEVVETLGLVRGNTVRARNVGRDITQGLRNLAGGELKGYTELMTDARDQAQDRMIEEAEALGADGVINVRFTTSSIADSGAEILAYGTAVRLR.

Belongs to the UPF0145 family.

The polypeptide is UPF0145 protein Hlac_1015 (Halorubrum lacusprofundi (strain ATCC 49239 / DSM 5036 / JCM 8891 / ACAM 34)).